A 256-amino-acid polypeptide reads, in one-letter code: MARGKKTQETGSSKRRSKVQEEEEHVEGSEEEVEEPEQKSSKRGSRKTTNSTSNKKKSVKKVESDDDDEDDLSELDVVVEDDNPVETSDNDEVATTPQQEKSSRSRKNRGDHESHDDNSDNEEQGDRGNRREHKPRPKVDPNTPIGKLATDQILQFLQERGEESFNPQLKHGARQLLNQLLGKYNGQRYGSKRGGPPRGSFGQRGGFNSRGRGMPPRMRQGDTRDTRDTRDTRLRFNTTQSNRRELNDQSDDLYND.

Disordered regions lie at residues 1-171 and 185-256; these read MARG…QLKH and NGQR…LYND. Positions 14 to 39 form a coiled coil; the sequence is KRRSKVQEEEEHVEGSEEEVEEPEQK. Acidic residues-rich tracts occupy residues 21 to 35 and 64 to 92; these read EEEEHVEGSEEEVEE and SDDDDEDDLSELDVVVEDDNPVETSDNDE. Basic and acidic residues predominate over residues 108–129; sequence NRGDHESHDDNSDNEEQGDRGN. The segment covering 192–205 has biased composition (gly residues); the sequence is KRGGPPRGSFGQRG. The segment covering 219–234 has biased composition (basic and acidic residues); sequence RQGDTRDTRDTRDTRL.

This is an uncharacterized protein from Acanthamoeba polyphaga (Amoeba).